Reading from the N-terminus, the 511-residue chain is Alpha-amylase 1A (511 aa).

The signal sequence occupies residues 1–15; it reads MKLFWLLFTIGFCWA. Position 16 is a pyrrolidone carboxylic acid (Q16). 3 disulfide bridges follow: C43/C101, C85/C130, and C156/C175. Ca(2+)-binding residues include N115, R173, and D182. Chloride is bound at residue R210. Catalysis depends on D212, which acts as the Nucleophile. Residue H216 participates in Ca(2+) binding. The active-site Proton donor is the E248. Residues N313 and R352 each coordinate chloride. N365 bears the Deamidated asparagine; partial mark. Cysteines 393 and 399 form a disulfide. At N427 the chain carries Deamidated asparagine; partial; alternate. N427 is a glycosylation site (N-linked (GlcNAc...) asparagine). The cysteines at positions 465 and 477 are disulfide-linked. Deamidated asparagine; partial is present on N474. N-linked (GlcNAc...) asparagine glycosylation is present at N476.

This sequence belongs to the glycosyl hydrolase 13 family. Monomer. Requires Ca(2+) as cofactor. Chloride serves as cofactor.

It is found in the secreted. It carries out the reaction Endohydrolysis of (1-&gt;4)-alpha-D-glucosidic linkages in polysaccharides containing three or more (1-&gt;4)-alpha-linked D-glucose units.. Functionally, calcium-binding enzyme that initiates starch digestion in the oral cavity. Catalyzes the hydrolysis of internal (1-&gt;4)-alpha-D-glucosidic bonds, yielding a mixture of maltose, isomaltose, small amounts of glucose as well as small linear and branched oligosaccharides called dextrins. The polypeptide is Alpha-amylase 1A (Homo sapiens (Human)).